Consider the following 377-residue polypeptide: tRNA/tmRNA (uracil-C(5))-methyltransferase (377 aa).

Residues glutamine 199, tyrosine 227, asparagine 232, glutamate 248, and aspartate 308 each contribute to the S-adenosyl-L-methionine site. The active-site Nucleophile is cysteine 333. Catalysis depends on glutamate 367, which acts as the Proton acceptor.

It belongs to the class I-like SAM-binding methyltransferase superfamily. RNA M5U methyltransferase family. TrmA subfamily.

It catalyses the reaction uridine(54) in tRNA + S-adenosyl-L-methionine = 5-methyluridine(54) in tRNA + S-adenosyl-L-homocysteine + H(+). The enzyme catalyses uridine(341) in tmRNA + S-adenosyl-L-methionine = 5-methyluridine(341) in tmRNA + S-adenosyl-L-homocysteine + H(+). Dual-specificity methyltransferase that catalyzes the formation of 5-methyluridine at position 54 (m5U54) in all tRNAs, and that of position 341 (m5U341) in tmRNA (transfer-mRNA). The chain is tRNA/tmRNA (uracil-C(5))-methyltransferase from Aeromonas salmonicida (strain A449).